The chain runs to 208 residues: Large ribosomal subunit protein eL13 (208 aa).

Phosphoserine is present on residues Ser-177 and Ser-180.

Belongs to the eukaryotic ribosomal protein eL13 family. As to quaternary structure, component of the large ribosomal subunit (LSU). Mature yeast ribosomes consist of a small (40S) and a large (60S) subunit. The 40S small subunit contains 1 molecule of ribosomal RNA (18S rRNA) and at least 33 different proteins. The large 60S subunit contains 3 rRNA molecules (25S, 5.8S and 5S rRNA) and at least 46 different proteins.

It is found in the cytoplasm. Its function is as follows. Component of the ribosome, a large ribonucleoprotein complex responsible for the synthesis of proteins in the cell. The small ribosomal subunit (SSU) binds messenger RNAs (mRNAs) and translates the encoded message by selecting cognate aminoacyl-transfer RNA (tRNA) molecules. The large subunit (LSU) contains the ribosomal catalytic site termed the peptidyl transferase center (PTC), which catalyzes the formation of peptide bonds, thereby polymerizing the amino acids delivered by tRNAs into a polypeptide chain. The nascent polypeptides leave the ribosome through a tunnel in the LSU and interact with protein factors that function in enzymatic processing, targeting, and the membrane insertion of nascent chains at the exit of the ribosomal tunnel. In Schizosaccharomyces pombe (strain 972 / ATCC 24843) (Fission yeast), this protein is Large ribosomal subunit protein eL13 (rpl13).